Consider the following 32-residue polypeptide: Chaperone protein DnaK (32 aa).

Belongs to the heat shock protein 70 family.

Acts as a chaperone. This is Chaperone protein DnaK from Anabaena sp. (strain L31).